The primary structure comprises 296 residues: UBX domain-containing protein 1-A (296 aa).

Residues 1 to 42 (MAECSTLESLIEMGFSSTRAEKALTATGNQGIEPAMDWLVEH) form the UBA domain. Positions 43–216 (EDDPDIDEPS…VQEPPTKKEY (174 aa)) are disordered. Over residues 61–75 (TDTADTTDTTDTTDT) the composition is skewed to low complexity. Composition is skewed to basic and acidic residues over residues 86 to 100 (PLTE…KRMM), 107 to 123 (QNER…EQEK), and 138 to 178 (KMQE…DRAR). Residues 87–177 (LTEEEKEKQT…KIARDKADRA (91 aa)) adopt a coiled-coil conformation. Low complexity predominate over residues 191-206 (PAETSIPATTPSPSSP). Positions 214–293 (KEYDQCRIQV…GLVPTAVLIV (80 aa)) constitute a UBX domain.

It localises to the cytoplasm. Component of a complex required to couple deglycosylation and proteasome-mediated degradation of misfolded proteins in the endoplasmic reticulum that are retrotranslocated in the cytosol. Involved in ubiquitin-proteasome systems. This chain is UBX domain-containing protein 1-A (ubxn1-a), found in Xenopus laevis (African clawed frog).